Reading from the N-terminus, the 445-residue chain is MREIVHLQAGQCGNQIGAKFWEVISDEHGIDPTGAYHGDSDLQLERINVYYNEATGGKYVPRAVLVDLEPGTMDSVRSGPFGQIFRPDNFVFGQSGAGNNWAKGHYTEGAELVDSVLDVVRKEAESCDCLQGFQLTHSLGGGTGSGMGTLLISKIREEYPDRIMNTFSVVPSPKVSDTVVEPYNATLSVHQLVENTDETYCIDNEALYDICFRTLKLTTPTYGDLNHLVSATMSGVTTCLRFPGQLNADLRKLAVNMVPFPRLHFFMPGFAPLTSRGSQQYRALTVPELTQQMFDAKNMMAACDPRHGRYLTVAAIFRGRMSMKEVDEQMLNVQNKNSSYFVEWIPNNVKTAVCDIPPRGLKMSATFIGNSTAIQELFKRISEQFTAMFRRKAFLHWYTGEGMDEMEFTEAESNMNDLVSEYQQYQDATAEEEGEFEEGEEEENA.

The MREI motif signature appears at 1–4; sequence MREI. GTP is bound by residues glutamine 11, glutamate 69, serine 138, glycine 142, threonine 143, glycine 144, asparagine 204, and asparagine 226. Glutamate 69 contributes to the Mg(2+) binding site. The interval 425–445 is disordered; that stretch reads YQDATAEEEGEFEEGEEEENA. Acidic residues predominate over residues 429-445; sequence TAEEEGEFEEGEEEENA. 5-glutamyl polyglutamate is present on glutamate 438.

It belongs to the tubulin family. In terms of assembly, dimer of alpha and beta chains. A typical microtubule is a hollow water-filled tube with an outer diameter of 25 nm and an inner diameter of 15 nM. Alpha-beta heterodimers associate head-to-tail to form protofilaments running lengthwise along the microtubule wall with the beta-tubulin subunit facing the microtubule plus end conferring a structural polarity. Microtubules usually have 13 protofilaments but different protofilament numbers can be found in some organisms and specialized cells. It depends on Mg(2+) as a cofactor. In terms of processing, some glutamate residues at the C-terminus are polyglycylated, resulting in polyglycine chains on the gamma-carboxyl group. Glycylation is mainly limited to tubulin incorporated into axonemes (cilia and flagella) whereas glutamylation is prevalent in neuronal cells, centrioles, axonemes, and the mitotic spindle. Both modifications can coexist on the same protein on adjacent residues, and lowering polyglycylation levels increases polyglutamylation, and reciprocally. The precise function of polyglycylation is still unclear. Some glutamate residues at the C-terminus are polyglutamylated, resulting in polyglutamate chains on the gamma-carboxyl group. Polyglutamylation plays a key role in microtubule severing by spastin (SPAST). SPAST preferentially recognizes and acts on microtubules decorated with short polyglutamate tails: severing activity by SPAST increases as the number of glutamates per tubulin rises from one to eight, but decreases beyond this glutamylation threshold. Preferential expression in germ cells.

The protein resides in the cytoplasm. It is found in the cytoskeleton. Functionally, tubulin is the major constituent of microtubules, a cylinder consisting of laterally associated linear protofilaments composed of alpha- and beta-tubulin heterodimers. Microtubules grow by the addition of GTP-tubulin dimers to the microtubule end, where a stabilizing cap forms. Below the cap, tubulin dimers are in GDP-bound state, owing to GTPase activity of alpha-tubulin. The chain is Tubulin beta-4 chain (tubb4) from Xenopus laevis (African clawed frog).